The following is a 178-amino-acid chain: uncharacterized protein (178 aa).

The segment at 64 to 103 is disordered; sequence GVSDNTNKTTAKDNVSDKSSENEVAQPKQVTPPVDATGNT. The segment covering 73 to 84 has biased composition (basic and acidic residues); it reads TAKDNVSDKSSE.

This is an uncharacterized protein from Acidianus sp. F28 (AFV-2).